The following is a 444-amino-acid chain: Glutamate--tRNA ligase 1 (444 aa).

The 'HIGH' region signature appears at 7 to 17 (PSPTGYLHVGN). A 'KMSKS' region motif is present at residues 238 to 242 (KISKR). Lys-241 serves as a coordination point for ATP.

The protein belongs to the class-I aminoacyl-tRNA synthetase family. Glutamate--tRNA ligase type 1 subfamily. As to quaternary structure, monomer.

The protein localises to the cytoplasm. It catalyses the reaction tRNA(Glu) + L-glutamate + ATP = L-glutamyl-tRNA(Glu) + AMP + diphosphate. Functionally, catalyzes the attachment of glutamate to tRNA(Glu) in a two-step reaction: glutamate is first activated by ATP to form Glu-AMP and then transferred to the acceptor end of tRNA(Glu). The polypeptide is Glutamate--tRNA ligase 1 (Wolbachia pipientis subsp. Culex pipiens (strain wPip)).